The following is a 132-amino-acid chain: Large ribosomal subunit protein eL8 (132 aa).

Lys-8 is modified (N6-acetyllysine; alternate). Residue Lys-8 forms a Glycyl lysine isopeptide (Lys-Gly) (interchain with G-Cter in SUMO2); alternate linkage. Lys-36 participates in a covalent cross-link: Glycyl lysine isopeptide (Lys-Gly) (interchain with G-Cter in SUMO2). Residue Lys-128 is modified to N6-acetyllysine.

The protein belongs to the eukaryotic ribosomal protein eL8 family. As to quaternary structure, component of the large ribosomal subunit. Interacts with CRY1. Interacts with DICER1, AGO2, TARBP2, MOV10 and EIF6; they form a large RNA-induced silencing complex (RISC).

The protein resides in the cytoplasm. Functionally, component of the large ribosomal subunit. The ribosome is a large ribonucleoprotein complex responsible for the synthesis of proteins in the cell. The sequence is that of Large ribosomal subunit protein eL8 (RPL7A) from Sus scrofa (Pig).